The sequence spans 723 residues: Malate synthase G (723 aa).

Acetyl-CoA-binding positions include valine 118, 125 to 126, serine 274, and arginine 311; that span reads RY. Residue arginine 338 is the Proton acceptor of the active site. Glyoxylate contacts are provided by residues arginine 338, glutamate 427, and 452 to 455; that span reads GFLD. Mg(2+) contacts are provided by glutamate 427 and aspartate 455. Acetyl-CoA is bound at residue proline 536. Cysteine 617 carries the post-translational modification Cysteine sulfenic acid (-SOH). The Proton donor role is filled by aspartate 631. At cysteine 688 the chain carries Cysteine sulfenic acid (-SOH).

This sequence belongs to the malate synthase family. GlcB subfamily. In terms of assembly, monomer. The cofactor is Mg(2+).

The protein resides in the cytoplasm. The enzyme catalyses glyoxylate + acetyl-CoA + H2O = (S)-malate + CoA + H(+). The protein operates within carbohydrate metabolism; glyoxylate cycle; (S)-malate from isocitrate: step 2/2. Functionally, involved in the glycolate utilization. Catalyzes the condensation and subsequent hydrolysis of acetyl-coenzyme A (acetyl-CoA) and glyoxylate to form malate and CoA. The polypeptide is Malate synthase G (Shigella flexneri).